A 124-amino-acid chain; its full sequence is 5-hydroxyisourate hydrolase (124 aa).

Substrate is bound by residues His15, Arg53, and Tyr121.

The protein belongs to the transthyretin family. 5-hydroxyisourate hydrolase subfamily. In terms of assembly, homotetramer.

The enzyme catalyses 5-hydroxyisourate + H2O = 5-hydroxy-2-oxo-4-ureido-2,5-dihydro-1H-imidazole-5-carboxylate + H(+). In terms of biological role, catalyzes the hydrolysis of 5-hydroxyisourate (HIU) to 2-oxo-4-hydroxy-4-carboxy-5-ureidoimidazoline (OHCU). The polypeptide is 5-hydroxyisourate hydrolase (Mesorhizobium japonicum (strain LMG 29417 / CECT 9101 / MAFF 303099) (Mesorhizobium loti (strain MAFF 303099))).